The following is a 454-amino-acid chain: Bifunctional protein GlmU (454 aa).

Residues 1-226 form a pyrophosphorylase region; it reads MALNVVILAA…AIEVEGANNR (226 aa). UDP-N-acetyl-alpha-D-glucosamine is bound by residues 8-11, Lys22, Gln73, 78-79, 100-102, Gly137, Glu151, Asn166, and Asn224; these read LAAG, GT, and YGD. Asp102 serves as a coordination point for Mg(2+). Position 224 (Asn224) interacts with Mg(2+). The segment at 227 to 247 is linker; that stretch reads VQLAQLERAYQARAAEKLMLE. The interval 248–454 is N-acetyltransferase; that stretch reads GANLRDPARI…GWTRPVKQKK (207 aa). Arg330 and Lys348 together coordinate UDP-N-acetyl-alpha-D-glucosamine. His360 acts as the Proton acceptor in catalysis. UDP-N-acetyl-alpha-D-glucosamine is bound by residues Tyr363 and Asn374. Residues Ala377, 383 to 384, Ser402, Ala420, and Arg437 contribute to the acetyl-CoA site; that span reads NY.

In the N-terminal section; belongs to the N-acetylglucosamine-1-phosphate uridyltransferase family. The protein in the C-terminal section; belongs to the transferase hexapeptide repeat family. Homotrimer. The cofactor is Mg(2+).

Its subcellular location is the cytoplasm. It catalyses the reaction alpha-D-glucosamine 1-phosphate + acetyl-CoA = N-acetyl-alpha-D-glucosamine 1-phosphate + CoA + H(+). It carries out the reaction N-acetyl-alpha-D-glucosamine 1-phosphate + UTP + H(+) = UDP-N-acetyl-alpha-D-glucosamine + diphosphate. The protein operates within nucleotide-sugar biosynthesis; UDP-N-acetyl-alpha-D-glucosamine biosynthesis; N-acetyl-alpha-D-glucosamine 1-phosphate from alpha-D-glucosamine 6-phosphate (route II): step 2/2. Its pathway is nucleotide-sugar biosynthesis; UDP-N-acetyl-alpha-D-glucosamine biosynthesis; UDP-N-acetyl-alpha-D-glucosamine from N-acetyl-alpha-D-glucosamine 1-phosphate: step 1/1. It participates in bacterial outer membrane biogenesis; LPS lipid A biosynthesis. Functionally, catalyzes the last two sequential reactions in the de novo biosynthetic pathway for UDP-N-acetylglucosamine (UDP-GlcNAc). The C-terminal domain catalyzes the transfer of acetyl group from acetyl coenzyme A to glucosamine-1-phosphate (GlcN-1-P) to produce N-acetylglucosamine-1-phosphate (GlcNAc-1-P), which is converted into UDP-GlcNAc by the transfer of uridine 5-monophosphate (from uridine 5-triphosphate), a reaction catalyzed by the N-terminal domain. The chain is Bifunctional protein GlmU from Shewanella loihica (strain ATCC BAA-1088 / PV-4).